A 208-amino-acid chain; its full sequence is MVSRRVHTLLEQLRAQGIKDEQVLDALAAVPREKFIDEAFEHKAWDNIALPIGQGQTISQPYMVARMTELLELTPQSRVLEIGTGSGYQTAILAHLVQHVCSVERIKGLQWQARRRLKQLDLHNVSTRHGDGWQGWQARAPFDAIIVTAAPPEIPTALMTQLDEGGILVLPVGEEHQFLKRVRRRGGEFIIDTVEAVRFVPLVKGELA.

Residue S59 is part of the active site.

The protein belongs to the methyltransferase superfamily. L-isoaspartyl/D-aspartyl protein methyltransferase family.

It is found in the cytoplasm. It carries out the reaction [protein]-L-isoaspartate + S-adenosyl-L-methionine = [protein]-L-isoaspartate alpha-methyl ester + S-adenosyl-L-homocysteine. In terms of biological role, catalyzes the methyl esterification of L-isoaspartyl residues in peptides and proteins that result from spontaneous decomposition of normal L-aspartyl and L-asparaginyl residues. It plays a role in the repair and/or degradation of damaged proteins. This chain is Protein-L-isoaspartate O-methyltransferase, found in Citrobacter koseri (strain ATCC BAA-895 / CDC 4225-83 / SGSC4696).